A 326-amino-acid polypeptide reads, in one-letter code: uncharacterized protein (326 aa).

Belongs to the ParB family.

This is an uncharacterized protein from Acidianus two-tailed virus (ATV).